Consider the following 100-residue polypeptide: Aspartyl/glutamyl-tRNA(Asn/Gln) amidotransferase subunit C (100 aa).

This sequence belongs to the GatC family. Heterotrimer of A, B and C subunits.

The enzyme catalyses L-glutamyl-tRNA(Gln) + L-glutamine + ATP + H2O = L-glutaminyl-tRNA(Gln) + L-glutamate + ADP + phosphate + H(+). It carries out the reaction L-aspartyl-tRNA(Asn) + L-glutamine + ATP + H2O = L-asparaginyl-tRNA(Asn) + L-glutamate + ADP + phosphate + 2 H(+). In terms of biological role, allows the formation of correctly charged Asn-tRNA(Asn) or Gln-tRNA(Gln) through the transamidation of misacylated Asp-tRNA(Asn) or Glu-tRNA(Gln) in organisms which lack either or both of asparaginyl-tRNA or glutaminyl-tRNA synthetases. The reaction takes place in the presence of glutamine and ATP through an activated phospho-Asp-tRNA(Asn) or phospho-Glu-tRNA(Gln). The polypeptide is Aspartyl/glutamyl-tRNA(Asn/Gln) amidotransferase subunit C (Erythrobacter litoralis (strain HTCC2594)).